The primary structure comprises 1478 residues: Fanconi anemia group D2 protein homolog (1478 aa).

A disordered region spans residues 33 to 53 (NISVESSSGGSEENIPASQEH). Positions 35-45 (SVESSSGGSEE) are enriched in low complexity. Residue Lys595 forms a Glycyl lysine isopeptide (Lys-Gly) (interchain with G-Cter in ubiquitin) linkage. 2 disordered regions span residues 896–918 (NQNQ…PEPD) and 1420–1478 (TPRS…SKCF). A compositionally biased stretch (acidic residues) spans 1429–1442 (ENSDDELPADDTSV). The segment covering 1468 to 1478 (RSKSSSRSKCF) has biased composition (basic residues).

The protein belongs to the Fanconi anemia protein FANCD2 family. Homodimer; cannot be ubiquitinated and does not bind DNA. Part of a Fanci-Fancd2 heterodimeric complex that binds and scans dsDNA for DNA damage. Interacts with Fancl (via C-terminus). Monoubiquitinated by Fancl in response to ionising radiation.

Its subcellular location is the nucleus. Required for maintenance of chromosomal stability. Together with Fancl, and probably Fanci, involved in DNA repair of damage caused by agents that induce interstrand cross-links but not agents that cause double strand breaks. Required for S phase checkpoint activation in response to ionizing radiation induced DNA damage. This Drosophila melanogaster (Fruit fly) protein is Fanconi anemia group D2 protein homolog.